A 116-amino-acid polypeptide reads, in one-letter code: Peptidyl-tRNA hydrolase (116 aa).

Belongs to the PTH2 family.

It localises to the cytoplasm. It catalyses the reaction an N-acyl-L-alpha-aminoacyl-tRNA + H2O = an N-acyl-L-amino acid + a tRNA + H(+). The natural substrate for this enzyme may be peptidyl-tRNAs which drop off the ribosome during protein synthesis. The chain is Peptidyl-tRNA hydrolase from Methanococcus maripaludis (strain C6 / ATCC BAA-1332).